Here is a 108-residue protein sequence, read N- to C-terminus: UPF0060 membrane protein RSKD131_0092 (108 aa).

Helical transmembrane passes span 5 to 25, 32 to 52, 62 to 82, and 86 to 106; these read LAAY…VWAW, ALWL…LALT, AVYG…VEGV, and RWDM…LWAP.

This sequence belongs to the UPF0060 family.

The protein localises to the cell inner membrane. This chain is UPF0060 membrane protein RSKD131_0092, found in Cereibacter sphaeroides (strain KD131 / KCTC 12085) (Rhodobacter sphaeroides).